The chain runs to 148 residues: Protein ADM2 (148 aa).

The first 24 residues, 1 to 24 (MARIPTAALGCISLLCLQLPGSLS), serve as a signal peptide directing secretion. The propeptide occupies 25-98 (RSLGGDPRPV…HSGPRRHSGP (74 aa)). 2 disordered regions span residues 26–57 (SLGG…APRP) and 70–101 (RGAG…PRRT). The cysteines at positions 110 and 115 are disulfide-linked. The residue at position 147 (Tyr-147) is a Tyrosine amide.

Belongs to the adrenomedullin family. As to expression, expressed in the esophagus, stomach, jejunum, ileum, ileocecum, ascending colon, transverse colon, descending colon and rectum. Expressed in myocardial cells of the heart, renal tubular cells, hypothalamus, and pituitary.

It is found in the secreted. Its function is as follows. Intermedin/ADM2 is a peptide hormone that plays a role as physiological regulator of gastrointestinal and cardiovascular bioactivities mediated by the CALCRL-RAMPs receptor complexes. Activates the cAMP-dependent pathway through interaction with CALCRL-RAMP3 receptor complex. The polypeptide is Protein ADM2 (Homo sapiens (Human)).